Consider the following 1025-residue polypeptide: Myosin phosphatase Rho-interacting protein (1025 aa).

The interval 2–383 (SAAKENPCRK…DRRSTEPSVT (382 aa)) is interaction with F-actin. One can recognise a PH 1 domain in the interval 43–150 (KPIYGGWLLL…WLEMLMVYPR (108 aa)). 2 disordered regions span residues 152–302 (NKQN…RRSQ) and 317–383 (HMET…PSVT). A compositionally biased stretch (low complexity) spans 179–189 (SSSSSSSSSSS). Phosphoserine occurs at positions 192, 217, 218, 220, 224, and 226. The segment covering 217–236 (SSLSPAQSPSQSQPPAASSL) has biased composition (low complexity). Residues 239-263 (PGLESKEEESAMSSDRMDCGRKVRV) show a composition bias toward basic and acidic residues. Ser265 and Ser269 each carry phosphoserine. Basic and acidic residues predominate over residues 271–281 (EKTKQDLKAEE). Residues 284 to 294 (LPPPLSPPSPS) are compositionally biased toward pro residues. A phosphoserine mark is found at Ser289 and Ser292. Position 295 is a phosphothreonine (Thr295). Residue Ser326 is modified to Phosphoserine. A compositionally biased stretch (basic and acidic residues) spans 332–348 (RQGRSEKRAFPRKRDFT). Thr348 carries the phosphothreonine modification. Phosphoserine is present on residues Ser362 and Ser365. The region spanning 387-483 (LNFKKGWLTK…WIQTIMKHVH (97 aa)) is the PH 2 domain. Disordered stretches follow at residues 485-545 (TTAP…TFDW) and 560-591 (VGGVGPADTHEPLRPEAEPGELERERARRREE). Residue Ser493 is modified to Phosphoserine. 2 stretches are compositionally biased toward basic and acidic residues: residues 524 to 545 (PEQKRSRARERRREGRSKTFDW) and 567 to 589 (DTHEPLRPEAEPGELERERARRR). The interval 546–824 (AEFRPIQQAL…SVQRELEVLS (279 aa)) is interaction with RHOA. Residue Ser619 is modified to Phosphoserine. Thr646 carries the post-translational modification Phosphothreonine. Residues Ser663 and Ser800 each carry the phosphoserine modification. Residues 673–977 (HELTSLLEKE…AATEALGEKS (305 aa)) adopt a coiled-coil conformation. The interaction with PPP1R12A stretch occupies residues 824–879 (SEQYSQKCLENAHLAQALEAERQALRQCQRENQELNAHNQELNNRLAAEITRLRTL). Phosphoserine is present on residues Ser891, Ser977, Ser993, Ser1014, and Ser1016.

As to quaternary structure, binds F-actin through its N-terminus. Interacts with MYZAP. Binds RHOA, PPP1R12A/MBS and PPP1R12C/MBS85 through adjacent coiled coil domains.

It localises to the cytoplasm. The protein resides in the cytoskeleton. Functionally, targets myosin phosphatase to the actin cytoskeleton. Required for the regulation of the actin cytoskeleton by RhoA and ROCK1. Depletion leads to an increased number of stress fibers in smooth muscle cells through stabilization of actin fibers by phosphorylated myosin. Overexpression of MRIP as well as its F-actin-binding region leads to disassembly of stress fibers in neuronal cells. This Homo sapiens (Human) protein is Myosin phosphatase Rho-interacting protein (MPRIP).